A 1086-amino-acid polypeptide reads, in one-letter code: Receptor-type guanylate cyclase gcy-6 (1086 aa).

The N-terminal stretch at 1–21 is a signal peptide; it reads MIGVYLRSVIFPLLFVIQTIC. Residues 22 to 487 lie on the Extracellular side of the membrane; that stretch reads QPPGNVFHLG…PANVFFQYIG (466 aa). N-linked (GlcNAc...) asparagine glycosylation is found at N325, N343, N387, and N427. Residues 488–508 traverse the membrane as a helical segment; sequence WFIAAIIIIFFTIMGAILAFI. Residues 509-1086 are Cytoplasmic-facing; sequence YLCHAKQQEV…APKILKKKQD (578 aa). Residues 560–836 form the Protein kinase domain; sequence SSTLSEVGET…NDNLMDHVFN (277 aa). ATP-binding positions include 566–574 and K589; that span reads VGETRNYLF. Positions 894 to 1024 constitute a Guanylate cyclase domain; the sequence is TLFFSDVVSF…DAVNTASRME (131 aa).

The protein belongs to the adenylyl cyclase class-4/guanylyl cyclase family. In terms of tissue distribution, expressed in both ASEL and ASER neurons throughout late embryonic and early larval stages. In adults, expressed asymmetrically in ASE left (ASEL) sensory neuron.

Its subcellular location is the cell membrane. It catalyses the reaction GTP = 3',5'-cyclic GMP + diphosphate. Its function is as follows. Guanylate cyclase involved in the production of the second messenger cGMP. Regulates chemotaxis responses toward the salt ion Mg(2+) and to a lesser extent toward Cl(1-) in ASE left (ASEL) sensory neuron. The protein is Receptor-type guanylate cyclase gcy-6 of Caenorhabditis elegans.